The chain runs to 232 residues: GFP-like non-fluorescent chromoprotein FP595 (232 aa).

Residues 63 to 65 (MYG) constitute a cross-link (2-iminomethyl-5-imidazolinone (Met-Gly)). Tyr64 bears the (E)-2,3-didehydrotyrosine mark.

This sequence belongs to the GFP family. Post-translationally, contains a chromophore consisting of modified amino acid residues. The chromophore is formed by autocatalytic backbone condensation between Xaa-N and Gly-(N+2), oxidation of Tyr-(N+1) to didehydrotyrosine, and formation of a double bond to the alpha-amino nitrogen of residue Tyr-(N+1). Maturation of the chromophore requires nothing other than molecular oxygen. As to expression, tentacle tips.

In terms of biological role, pigment protein that is intensely purple in color. The sequence is that of GFP-like non-fluorescent chromoprotein FP595 from Anemonia sulcata (Mediterranean snakelocks sea anemone).